Consider the following 193-residue polypeptide: Chlorate reductase assembly chaperone protein (193 aa).

The protein belongs to the type II DMSO reductase enzyme chaperone family.

Its subcellular location is the cytoplasm. Functionally, may function as a system-specific chaperone protein essential for the assembly of an active chlorate reductase ClrABC. The sequence is that of Chlorate reductase assembly chaperone protein (clrD) from Ideonella dechloratans.